The chain runs to 466 residues: Phytase A (466 aa).

A signal peptide spans 1-19; that stretch reads MAVLSVLLPITFLLSSVTG. Residues cysteine 30 and cysteine 39 are joined by a disulfide bond. Positions 49, 50, 80, 81, 84, and 87 each coordinate 1D-myo-inositol hexakisphosphate. Intrachain disulfides connect cysteine 70–cysteine 413, cysteine 214–cysteine 464, cysteine 263–cysteine 281, and cysteine 435–cysteine 443. The active-site Nucleophile is the histidine 81. N-linked (GlcNAc...) asparagine glycosylation is found at asparagine 104 and asparagine 119. A 1D-myo-inositol hexakisphosphate-binding site is contributed by arginine 164. Residues asparagine 206 and asparagine 219 are each glycosylated (N-linked (GlcNAc...) asparagine). Lysine 300 lines the 1D-myo-inositol hexakisphosphate pocket. N-linked (GlcNAc...) asparagine glycosylation is found at asparagine 338 and asparagine 351. 1D-myo-inositol hexakisphosphate-binding residues include histidine 360 and aspartate 361. Residue asparagine 375 is glycosylated (N-linked (GlcNAc...) asparagine).

It belongs to the histidine acid phosphatase family. Monomer.

Its subcellular location is the secreted. It carries out the reaction 1D-myo-inositol hexakisphosphate + H2O = 1D-myo-inositol 1,2,4,5,6-pentakisphosphate + phosphate. The catalysed reaction is 1D-myo-inositol 1,2,4,5,6-pentakisphosphate + H2O = 1D-myo-inositol 1,2,5,6-tetrakisphosphate + phosphate. The enzyme catalyses 1D-myo-inositol 1,2,5,6-tetrakisphosphate + H2O = 1D-myo-inositol 1,2,6-trisphosphate + phosphate. It catalyses the reaction 1D-myo-inositol 1,2,6-trisphosphate + H2O = 1D-myo-inositol 1,2-bisphosphate + phosphate. It carries out the reaction 1D-myo-inositol 1,2-bisphosphate + H2O = 1D-myo-inositol 2-phosphate + phosphate. Functionally, catalyzes the phosphate monoester hydrolysis of phytic acid (myo-inositol hexakisphosphate), which results in the stepwise formation of myo-inositol pentakis-, tetrakis-, tris-, bis-, and monophosphates, as well as the liberation of inorganic phosphate. Myo-inositol 2-monophosphate is the end product. This Aspergillus oryzae (strain ATCC 42149 / RIB 40) (Yellow koji mold) protein is Phytase A (phyA).